Reading from the N-terminus, the 116-residue chain is DNA-directed RNA polymerase subunit omega (116 aa).

The protein belongs to the RNA polymerase subunit omega family. In terms of assembly, the RNAP catalytic core consists of 2 alpha, 1 beta, 1 beta' and 1 omega subunit. When a sigma factor is associated with the core the holoenzyme is formed, which can initiate transcription.

The catalysed reaction is RNA(n) + a ribonucleoside 5'-triphosphate = RNA(n+1) + diphosphate. Its function is as follows. Promotes RNA polymerase assembly. Latches the N- and C-terminal regions of the beta' subunit thereby facilitating its interaction with the beta and alpha subunits. The chain is DNA-directed RNA polymerase subunit omega from Hyphomonas neptunium (strain ATCC 15444).